A 176-amino-acid polypeptide reads, in one-letter code: Putative L,D-transpeptidase YqjB (176 aa).

The first 25 residues, 1-25 (MRFFLCSIFMMISPIWPLGENPLPG), serve as a signal peptide directing secretion. In terms of domain architecture, L,D-TPase catalytic spans 27-151 (PYVIVNKRTN…IPVGTRVLIT (125 aa)). The Proton donor/acceptor role is filled by His111. The active-site Nucleophile is the Cys127.

The protein belongs to the YkuD family.

It functions in the pathway cell wall biogenesis; peptidoglycan biosynthesis. This Bacillus subtilis (strain 168) protein is Putative L,D-transpeptidase YqjB (yqjB).